Reading from the N-terminus, the 539-residue chain is MYGGDEYATNSEYYDDYAHTGDPQLDMEYERNYYAARMPDNVKYFLINFCQAIKEGNLYDIQNMYENTFPQISDHHFDKTAWPEEQEVAAIVDNDKVFLILYKELYYRHIHARIPGGPKLEQRINSFFNYCDFFNLIISAQNPVMLELPDIWLWELVDEFVYQFQNFAQYRARLTEKSQDEIQQLCVNHSNEWSILCILNVLHSLVDISNIKKQLEAISQGVDPQTVAGDFGKLSFYKMLGYFSLVGLLRVHSLLGDYYQAIKVLEPIEIHKKSAYSHIPACQISTSYYVGFAYMMMRRYADAIRTFSDILLYIQRTKQLYSTRSYQNDQINKQAEQMYHLLAICLVLHPQCIDESIQQVLREKNYHDAMFKMQCGDLEVFKSFFVFACPRFVSPCPPAVDAPMDDYVKDPMEHQLLVFMDEVRQQKDLPTTRSYLKLYTTLPLTKLASFIDPNASEDDVSKLLIRLLCFKHKMRNLVWSKGPSGLEGTFKSGSELDFYIDDDMIHIADTKVSHRYGDFFVRKILKFNDLNRKLKNINI.

A PCI domain is found at 306-514 (TFSDILLYIQ…IHIADTKVSH (209 aa)).

It belongs to the eIF-3 subunit L family. Component of the eukaryotic translation initiation factor 3 (eIF-3) complex. The eIF-3 complex interacts with pix.

It is found in the cytoplasm. Its function is as follows. Component of the eukaryotic translation initiation factor 3 (eIF-3) complex, which is involved in protein synthesis of a specialized repertoire of mRNAs and, together with other initiation factors, stimulates binding of mRNA and methionyl-tRNAi to the 40S ribosome. The eIF-3 complex specifically targets and initiates translation of a subset of mRNAs involved in cell proliferation. The sequence is that of Eukaryotic translation initiation factor 3 subunit L from Drosophila sechellia (Fruit fly).